The following is a 175-amino-acid chain: Co-chaperone protein HscB homolog (175 aa).

The J domain maps to 7–79 (SHFDLFHLPA…LKRATYLLSL (73 aa)).

This sequence belongs to the HscB family. Interacts with HscA and stimulates its ATPase activity.

Its function is as follows. Co-chaperone involved in the maturation of iron-sulfur cluster-containing proteins. Seems to help targeting proteins to be folded toward HscA. This is Co-chaperone protein HscB homolog from Burkholderia multivorans (strain ATCC 17616 / 249).